The chain runs to 1318 residues: DNA-directed RNA polymerase subunit beta' (1318 aa).

Zn(2+) is bound by residues Cys221, Cys295, Cys302, and Cys305.

Belongs to the RNA polymerase beta' chain family. RpoC2 subfamily. In terms of assembly, in cyanobacteria the RNAP catalytic core is composed of 2 alpha, 1 beta, 1 beta', 1 gamma and 1 omega subunit. When a sigma factor is associated with the core the holoenzyme is formed, which can initiate transcription. Zn(2+) serves as cofactor.

The catalysed reaction is RNA(n) + a ribonucleoside 5'-triphosphate = RNA(n+1) + diphosphate. Functionally, DNA-dependent RNA polymerase catalyzes the transcription of DNA into RNA using the four ribonucleoside triphosphates as substrates. This chain is DNA-directed RNA polymerase subunit beta', found in Synechococcus sp. (strain ATCC 27144 / PCC 6301 / SAUG 1402/1) (Anacystis nidulans).